A 469-amino-acid polypeptide reads, in one-letter code: tRNA-2-methylthio-N(6)-dimethylallyladenosine synthase (469 aa).

The region spanning 22 to 142 (RKVFIKTYGC…LPEALRRAQQ (121 aa)) is the MTTase N-terminal domain. Cys31, Cys67, Cys105, Cys183, Cys187, and Cys190 together coordinate [4Fe-4S] cluster. Residues 169–401 (RARGVTAFLT…QALLLKQQQE (233 aa)) enclose the Radical SAM core domain. Residues 404–466 (ESCIGKEIDL…TNSLFAERAE (63 aa)) enclose the TRAM domain.

It belongs to the methylthiotransferase family. MiaB subfamily. Monomer. The cofactor is [4Fe-4S] cluster.

It is found in the cytoplasm. The enzyme catalyses N(6)-dimethylallyladenosine(37) in tRNA + (sulfur carrier)-SH + AH2 + 2 S-adenosyl-L-methionine = 2-methylsulfanyl-N(6)-dimethylallyladenosine(37) in tRNA + (sulfur carrier)-H + 5'-deoxyadenosine + L-methionine + A + S-adenosyl-L-homocysteine + 2 H(+). Catalyzes the methylthiolation of N6-(dimethylallyl)adenosine (i(6)A), leading to the formation of 2-methylthio-N6-(dimethylallyl)adenosine (ms(2)i(6)A) at position 37 in tRNAs that read codons beginning with uridine. This Rhizobium etli (strain CIAT 652) protein is tRNA-2-methylthio-N(6)-dimethylallyladenosine synthase.